The primary structure comprises 365 residues: UDP-N-acetylglucosamine--N-acetylmuramyl-(pentapeptide) pyrophosphoryl-undecaprenol N-acetylglucosamine transferase (365 aa).

Residues 13–15, N125, R165, S192, and Q293 each bind UDP-N-acetyl-alpha-D-glucosamine; that span reads TGG.

This sequence belongs to the glycosyltransferase 28 family. MurG subfamily.

It is found in the cell inner membrane. The enzyme catalyses di-trans,octa-cis-undecaprenyl diphospho-N-acetyl-alpha-D-muramoyl-L-alanyl-D-glutamyl-meso-2,6-diaminopimeloyl-D-alanyl-D-alanine + UDP-N-acetyl-alpha-D-glucosamine = di-trans,octa-cis-undecaprenyl diphospho-[N-acetyl-alpha-D-glucosaminyl-(1-&gt;4)]-N-acetyl-alpha-D-muramoyl-L-alanyl-D-glutamyl-meso-2,6-diaminopimeloyl-D-alanyl-D-alanine + UDP + H(+). It participates in cell wall biogenesis; peptidoglycan biosynthesis. Its function is as follows. Cell wall formation. Catalyzes the transfer of a GlcNAc subunit on undecaprenyl-pyrophosphoryl-MurNAc-pentapeptide (lipid intermediate I) to form undecaprenyl-pyrophosphoryl-MurNAc-(pentapeptide)GlcNAc (lipid intermediate II). The sequence is that of UDP-N-acetylglucosamine--N-acetylmuramyl-(pentapeptide) pyrophosphoryl-undecaprenol N-acetylglucosamine transferase from Ruegeria sp. (strain TM1040) (Silicibacter sp.).